The following is a 142-amino-acid chain: Small heat shock protein IbpB (142 aa).

A sHSP domain is found at 25-136; the sequence is GQEPQGFPPY…QPQRIAIGTT (112 aa).

Belongs to the small heat shock protein (HSP20) family. Homodimer. Forms homomultimers of about 100-150 subunits at optimal growth temperatures. Conformation changes to oligomers at high temperatures or high ionic concentrations. The decrease in size of the multimers is accompanied by an increase in chaperone activity.

The protein resides in the cytoplasm. In terms of biological role, associates with aggregated proteins, together with IbpA, to stabilize and protect them from irreversible denaturation and extensive proteolysis during heat shock and oxidative stress. Aggregated proteins bound to the IbpAB complex are more efficiently refolded and reactivated by the ATP-dependent chaperone systems ClpB and DnaK/DnaJ/GrpE. Its activity is ATP-independent. In Serratia proteamaculans (strain 568), this protein is Small heat shock protein IbpB.